The chain runs to 317 residues: Putative 2-hydroxyacid dehydrogenase SAOUHSC_02577 (317 aa).

Residues 155–156 (EI), 234–236 (ASR), and Asp-260 each bind NAD(+). Residue Arg-236 is part of the active site. The active site involves Glu-265. His-283 acts as the Proton donor in catalysis. 283–286 (HIGN) lines the NAD(+) pocket.

Belongs to the D-isomer specific 2-hydroxyacid dehydrogenase family.

In Staphylococcus aureus (strain NCTC 8325 / PS 47), this protein is Putative 2-hydroxyacid dehydrogenase SAOUHSC_02577.